The sequence spans 861 residues: DNA mismatch repair protein MutS (861 aa).

618 to 625 contacts ATP; the sequence is GPNMGGKS.

Belongs to the DNA mismatch repair MutS family.

Functionally, this protein is involved in the repair of mismatches in DNA. It is possible that it carries out the mismatch recognition step. This protein has a weak ATPase activity. This chain is DNA mismatch repair protein MutS, found in Shewanella sp. (strain MR-7).